The primary structure comprises 80 residues: Raniseptin-6 (80 aa).

A signal peptide spans 1-22 (MAFLKKSLFLVLFLGIVSLSIC). Positions 23 to 49 (EEEKREGEEEEKQEEENEELSEEELRE) are excised as a propeptide.

Belongs to the frog skin active peptide (FSAP) family. Dermaseptin subfamily. In terms of tissue distribution, expressed by the skin glands.

Its subcellular location is the secreted. Its function is as follows. Has antibacterial activity. This Boana raniceps (Chaco tree frog) protein is Raniseptin-6.